Reading from the N-terminus, the 956-residue chain is Ubiquitin carboxyl-terminal hydrolase CYLD (956 aa).

The interval 106–593 is interaction with TRIP; it reads CEERFSLFKN…LEIMIGKKKG (488 aa). CAP-Gly domains are found at residues 153 to 198 and 253 to 286; these read LAER…VFVA and DVLP…VQLC. The interval 309-353 is disordered; that stretch reads SVTQERRPPKLAFMSRGVGDKGSSSHNKPKATGSTSDPGNRNRSE. Residues 330–349 are compositionally biased toward polar residues; sequence GSSSHNKPKATGSTSDPGNR. A Phosphoserine modification is found at serine 387. The interval 392 to 411 is disordered; it reads STDFDRSSPPLQPPPVNSLS. The interval 394 to 469 is interaction with TRAF2; that stretch reads DFDRSSPPLQ…LAMPPGNSHG (76 aa). Residues serine 418 and serine 422 each carry the phosphoserine modification. An interaction with IKBKG/NEMO region spans residues 470 to 684; sequence LEVGSLAEVK…FTSEEKDPEE (215 aa). Residues 492 to 535 enclose the CAP-Gly 3 domain; the sequence is GQPPGLNEVLAGLELEDECAGCTDGTFRGTRYFTCALKKALFVK. A USP domain is found at 592 to 950; it reads KGIQGHYNSC…DAYMCMYQSP (359 aa). The Nucleophile role is filled by cysteine 601. The interval 781 to 833 is B-box; sequence LEDTPRQCRICGGLAMYECRECYDDPDISAGKIKQFCKTCNTQVHLHPKRLNH. Zn(2+)-binding residues include cysteine 788, cysteine 791, cysteine 799, cysteine 802, cysteine 817, cysteine 820, histidine 825, and histidine 833. The Proton acceptor role is filled by histidine 871.

Belongs to the peptidase C19 family. As to quaternary structure, interacts (via CAP-Gly domain) with IKBKG/NEMO (via proline-rich C-terminal region). Interacts with TRAF2 and TRIP. Interacts with PLK1, DVL1, DVL3, MAVS, TBK1, IKKE and RIGI. Interacts (via CAP-Gly domain) with microtubules. Interacts with HDAC6 and BCL3. Interacts with MAP3K7. Identified in a complex with TRAF6 and SQSTM1. Interacts with OPTN and SQSTM1. Interacts with CEP350. Interacts with RNF31; the interaction is indirect and is mediated via SPATA2. Interacts with SPATA2 (via the PUB domain); the interaction is direct and recruits CYLD to the LUBAC complex, thereby regulating TNF-alpha-induced necroptosis. In terms of processing, phosphorylated on several serine residues by IKKA and/or IKKB in response to immune stimuli. Phosphorylation requires IKBKG. Phosphorylation abolishes TRAF2 deubiquitination, interferes with the activation of Jun kinases, and strongly reduces CD40-dependent gene activation by NF-kappa-B. Post-translationally, ubiquitinated. Polyubiquitinated in hepatocytes treated with palmitic acid. Ubiquitination is mediated by E3 ligase TRIM47 and leads to proteasomal degradation.

It localises to the cytoplasm. The protein localises to the perinuclear region. It is found in the cytoskeleton. The protein resides in the cell membrane. Its subcellular location is the microtubule organizing center. It localises to the centrosome. The protein localises to the spindle. It is found in the cilium basal body. The catalysed reaction is Thiol-dependent hydrolysis of ester, thioester, amide, peptide and isopeptide bonds formed by the C-terminal Gly of ubiquitin (a 76-residue protein attached to proteins as an intracellular targeting signal).. Its function is as follows. Deubiquitinase that specifically cleaves 'Lys-63'- and linear 'Met-1'-linked polyubiquitin chains and is involved in NF-kappa-B activation and TNF-alpha-induced necroptosis. Negatively regulates NF-kappa-B activation by deubiquitinating upstream signaling factors. Contributes to the regulation of cell survival, proliferation and differentiation via its effects on NF-kappa-B activation. Negative regulator of Wnt signaling. Inhibits HDAC6 and thereby promotes acetylation of alpha-tubulin and stabilization of microtubules. Plays a role in the regulation of microtubule dynamics, and thereby contributes to the regulation of cell proliferation, cell polarization, cell migration, and angiogenesis. Required for normal cell cycle progress and normal cytokinesis. Inhibits nuclear translocation of NF-kappa-B. Plays a role in the regulation of inflammation and the innate immune response, via its effects on NF-kappa-B activation. Dispensable for the maturation of intrathymic natural killer cells, but required for the continued survival of immature natural killer cells. Negatively regulates TNFRSF11A signaling and osteoclastogenesis. Involved in the regulation of ciliogenesis, allowing ciliary basal bodies to migrate and dock to the plasma membrane; this process does not depend on NF-kappa-B activation. Ability to remove linear ('Met-1'-linked) polyubiquitin chains regulates innate immunity and TNF-alpha-induced necroptosis: recruited to the LUBAC complex via interaction with SPATA2 and restricts linear polyubiquitin formation on target proteins. Regulates innate immunity by restricting linear polyubiquitin formation on RIPK2 in response to NOD2 stimulation. Involved in TNF-alpha-induced necroptosis by removing linear ('Met-1'-linked) polyubiquitin chains from RIPK1, thereby regulating the kinase activity of RIPK1. Negatively regulates intestinal inflammation by removing 'Lys-63' linked polyubiquitin chain of NLRP6, thereby reducing the interaction between NLRP6 and PYCARD/ASC and formation of the NLRP6 inflammasome. Does not catalyze deubiquitination of heterotypic 'Lys-63'-/'Lys-48'-linked branched ubiquitin chains. Removes 'Lys-63' linked polyubiquitin chain of MAP3K7, which inhibits phosphorylation and blocks downstream activation of the JNK-p38 kinase cascades. Also removes 'Lys-63'-linked polyubiquitin chains of MAP3K1 and MA3P3K3, which inhibit their interaction with MAP2K1 and MAP2K2. The protein is Ubiquitin carboxyl-terminal hydrolase CYLD (CYLD) of Pongo abelii (Sumatran orangutan).